The following is a 302-amino-acid chain: Zinc transporter ZIP1 (302 aa).

At Met-1–Gln-6 the chain is on the extracellular side. A helical membrane pass occupies residues Val-7–Ala-27. Over Arg-28–Val-44 the chain is Cytoplasmic. The chain crosses the membrane as a helical span at residues Leu-45–Ile-65. At Pro-66–Pro-86 the chain is on the extracellular side. The chain crosses the membrane as a helical span at residues Leu-87 to Leu-107. Over Ser-108–Arg-158 the chain is Cytoplasmic. Residues Ser-159–Leu-179 form a helical membrane-spanning segment. The Extracellular segment spans residues Gln-180–Lys-185. The chain crosses the membrane as a helical span at residues Val-186–Val-206. Residues Lys-207–Val-219 are Cytoplasmic-facing. The chain crosses the membrane as a helical span at residues Leu-220–Ile-240. At Glu-241–Gly-247 the chain is on the extracellular side. A helical transmembrane segment spans residues Gly-248–Leu-268. At Glu-269–Pro-281 the chain is on the cytoplasmic side. Residues Leu-282–Gly-302 form a helical membrane-spanning segment.

It belongs to the ZIP transporter (TC 2.A.5) family. Ubiquitous. Highest levels in ovary, high levels in heart, eye, kidney and brain, moderate levels in intestine and low levels in gill and skin.

The protein localises to the cell membrane. The protein resides in the endoplasmic reticulum membrane. The catalysed reaction is Zn(2+)(in) = Zn(2+)(out). In terms of biological role, transporter for the divalent cation Zn(2+). Mediates the influx of Zn(2+) into cells from extracellular space. The chain is Zinc transporter ZIP1 (slc39a1) from Danio rerio (Zebrafish).